The primary structure comprises 62 residues: uncharacterized protein (62 aa).

The next 2 membrane-spanning stretches (helical) occupy residues 9–29 (HNELLEFFHLFVTIQWLALIG) and 42–62 (AAVVGFFIRFTFGTPIFLQLL).

Its subcellular location is the membrane. This is an uncharacterized protein from Saccharomyces cerevisiae (strain ATCC 204508 / S288c) (Baker's yeast).